The following is a 118-amino-acid chain: Large ribosomal subunit protein uL22 (118 aa).

It belongs to the universal ribosomal protein uL22 family. Part of the 50S ribosomal subunit.

Its function is as follows. This protein binds specifically to 23S rRNA; its binding is stimulated by other ribosomal proteins, e.g. L4, L17, and L20. It is important during the early stages of 50S assembly. It makes multiple contacts with different domains of the 23S rRNA in the assembled 50S subunit and ribosome. Functionally, the globular domain of the protein is located near the polypeptide exit tunnel on the outside of the subunit, while an extended beta-hairpin is found that lines the wall of the exit tunnel in the center of the 70S ribosome. The protein is Large ribosomal subunit protein uL22 of Synechococcus sp. (strain RCC307).